The primary structure comprises 63 residues: Cecropin-A2 (63 aa).

An N-terminal signal peptide occupies residues 1-23; sequence MNFYNIFVFVALILAITIGQSEA. Arg62 is subject to Arginine amide.

This sequence belongs to the cecropin family. As to expression, strongly expressed in larval, pupal and adult fat body and hemocytes after injection of bacteria. Maximal expression in the adult involves fat body cells of the head, thorax and abdomen.

It localises to the secreted. Functionally, cecropins have lytic and antibacterial activity against several Gram-positive and Gram-negative bacteria. This chain is Cecropin-A2, found in Drosophila melanogaster (Fruit fly).